Reading from the N-terminus, the 222-residue chain is MGQKINPNGFRLGVNRDWEAKWYADKNYADTLNEDLRIRKFISEKLADASVSTVEIERAANRINISIHTAKPGMVIGKGGKEVEALRKQLSALTKKNVHINIVEIKKPDLDAKLVGEGIARQLEARIAFRRATRQATQRSMRSGAKGIKVQTAGRLNGADMARREWHTEGSVPLHTLRADIDYAWVEAATTYGQIGVKVWINRGEILPQRKNKPSKKTKGGN.

A KH type-2 domain is found at 38-106; that stretch reads IRKFISEKLA…NVHINIVEIK (69 aa).

The protein belongs to the universal ribosomal protein uS3 family. Part of the 30S ribosomal subunit. Forms a tight complex with proteins S10 and S14.

In terms of biological role, binds the lower part of the 30S subunit head. Binds mRNA in the 70S ribosome, positioning it for translation. The protein is Small ribosomal subunit protein uS3 of Lactobacillus gasseri (strain ATCC 33323 / DSM 20243 / BCRC 14619 / CIP 102991 / JCM 1131 / KCTC 3163 / NCIMB 11718 / NCTC 13722 / AM63).